Here is a 714-residue protein sequence, read N- to C-terminus: Mitochondrial division protein 1 (714 aa).

The stretch at 240 to 298 forms a coiled coil; that stretch reads LNIQKNSTLSEIRDIEVEVENLRQKKEKLLGKIANIEQNQLLLEDNLKQIDDRLDFLEE. The interval 323–354 is disordered; it reads LKNDAIRNEGVTTESISSEASNLPPRRRQQLR. Polar residues predominate over residues 332 to 343; that stretch reads GVTTESISSEAS. A Phosphoserine modification is found at Ser-376. WD repeat units lie at residues 396 to 436, 439 to 478, 500 to 539, 561 to 603, 604 to 642, 644 to 681, and 685 to 714; these read THDD…KIGE, GHLA…QLYQ, AHTD…QTID, TQRN…RTLK, GHTD…NKFH, YSAP…SWSC, and GNET…IWAV.

The protein belongs to the WD repeat MDV1/CAF4 family. In terms of assembly, interacts with CAF4, DNM1 and FIS1, components of the mitochondrial fission machinery. Interacts via its N-terminal, coiled-coil extension (NTE) with FIS1, and via its WD repeats with DNM1.

Its subcellular location is the mitochondrion outer membrane. In terms of biological role, involved in mitochondrial fission. Has a partially redundant function to CAF4 in acting as an adapter protein, binding to FIS1 on the mitochondrial outer membrane and recruiting the dynamin-like GTPase DNM1 to form mitochondrial fission complexes. Formation of these complexes is required to promote constriction and fission of the mitochondrial compartment at a late step in mitochondrial division. This chain is Mitochondrial division protein 1 (MDV1), found in Saccharomyces cerevisiae (strain YJM789) (Baker's yeast).